The following is a 312-amino-acid chain: Methionyl-tRNA formyltransferase (312 aa).

A (6S)-5,6,7,8-tetrahydrofolate-binding site is contributed by 117-120 (SLLP).

The protein belongs to the Fmt family.

It catalyses the reaction L-methionyl-tRNA(fMet) + (6R)-10-formyltetrahydrofolate = N-formyl-L-methionyl-tRNA(fMet) + (6S)-5,6,7,8-tetrahydrofolate + H(+). Attaches a formyl group to the free amino group of methionyl-tRNA(fMet). The formyl group appears to play a dual role in the initiator identity of N-formylmethionyl-tRNA by promoting its recognition by IF2 and preventing the misappropriation of this tRNA by the elongation apparatus. The sequence is that of Methionyl-tRNA formyltransferase from Bordetella pertussis (strain Tohama I / ATCC BAA-589 / NCTC 13251).